Here is a 320-residue protein sequence, read N- to C-terminus: o-succinylbenzoate synthase (320 aa).

Lys-133 acts as the Proton donor in catalysis. The Mg(2+) site is built by Asp-161, Glu-190, and Asp-213. Catalysis depends on Lys-235, which acts as the Proton acceptor.

The protein belongs to the mandelate racemase/muconate lactonizing enzyme family. MenC type 1 subfamily. It depends on a divalent metal cation as a cofactor.

It catalyses the reaction (1R,6R)-6-hydroxy-2-succinyl-cyclohexa-2,4-diene-1-carboxylate = 2-succinylbenzoate + H2O. It functions in the pathway quinol/quinone metabolism; 1,4-dihydroxy-2-naphthoate biosynthesis; 1,4-dihydroxy-2-naphthoate from chorismate: step 4/7. Its pathway is quinol/quinone metabolism; menaquinone biosynthesis. Its function is as follows. Converts 2-succinyl-6-hydroxy-2,4-cyclohexadiene-1-carboxylate (SHCHC) to 2-succinylbenzoate (OSB). This chain is o-succinylbenzoate synthase, found in Salmonella choleraesuis (strain SC-B67).